Reading from the N-terminus, the 235-residue chain is NAD(P)H-hydrate epimerase (235 aa).

One can recognise a YjeF N-terminal domain in the interval 12 to 218; that stretch reads AIVMDQLLMG…EFLKETNLTI (207 aa). 62–66 is a (6S)-NADPHX binding site; it reads NNGGD. The K(+) site is built by N63 and D127. Residues 131-137 and D161 each bind (6S)-NADPHX; that span reads GYSFKGD. Residue S164 coordinates K(+).

Belongs to the NnrE/AIBP family. K(+) serves as cofactor.

The catalysed reaction is (6R)-NADHX = (6S)-NADHX. The enzyme catalyses (6R)-NADPHX = (6S)-NADPHX. Its function is as follows. Catalyzes the epimerization of the S- and R-forms of NAD(P)HX, a damaged form of NAD(P)H that is a result of enzymatic or heat-dependent hydration. This is a prerequisite for the S-specific NAD(P)H-hydrate dehydratase to allow the repair of both epimers of NAD(P)HX. The protein is NAD(P)H-hydrate epimerase of Dictyostelium discoideum (Social amoeba).